The following is a 483-amino-acid chain: Teichuronic acid biosynthesis protein TuaB (483 aa).

Helical transmembrane passes span 15 to 34 (TSIS…ALLG), 41 to 63 (EFGL…DMGF), 83 to 105 (WLNI…VIAG), 112 to 134 (LVFL…QYQY), 154 to 176 (VLSF…YVIS), 294 to 316 (LALV…ITAV), 321 to 343 (WLAA…LMNP), 356 to 378 (LAFY…AVQT), 382 to 404 (LTVA…WLLA), 411 to 433 (LSAY…IIAF), and 448 to 470 (MRLA…KAYP).

The protein belongs to the polysaccharide synthase family.

Its subcellular location is the cell membrane. The protein operates within cell wall biogenesis; teichuronic acid biosynthesis. In terms of biological role, might be involved in the translocation of teichuronic acid repeating units from the inner to the outer surface of the membrane. This Bacillus subtilis (strain 168) protein is Teichuronic acid biosynthesis protein TuaB (tuaB).